We begin with the raw amino-acid sequence, 135 residues long: Ribosome-binding factor A (135 aa).

It belongs to the RbfA family. As to quaternary structure, monomer. Binds 30S ribosomal subunits, but not 50S ribosomal subunits or 70S ribosomes.

The protein resides in the cytoplasm. Functionally, one of several proteins that assist in the late maturation steps of the functional core of the 30S ribosomal subunit. Associates with free 30S ribosomal subunits (but not with 30S subunits that are part of 70S ribosomes or polysomes). Required for efficient processing of 16S rRNA. May interact with the 5'-terminal helix region of 16S rRNA. This chain is Ribosome-binding factor A, found in Aliivibrio salmonicida (strain LFI1238) (Vibrio salmonicida (strain LFI1238)).